Reading from the N-terminus, the 1363-residue chain is Spike glycoprotein (1363 aa).

An N-terminal signal peptide occupies residues 1-13; that stretch reads MFLILLISLPMAL. At 14–1307 the chain is on the extracellular side; the sequence is AVIGDLKCTT…GTYEYYVKWP (1294 aa). One can recognise a BetaCoV S1-NTD domain in the interval 15–298; the sequence is VIGDLKCTTV…DFMSEIKCKT (284 aa). Cystine bridges form between C21–C165, C160–C193, C172–C252, C286–C296, and C331–C356. N-linked (GlcNAc...) asparagine; by host glycans are attached at residues N59 and N133. A glycan (N-linked (GlcNAc...) asparagine; by host) is linked at N198. The BetaCoV S1-CTD domain occupies 329 to 617; that stretch reads PDCNIEAWLN…DVNSGTTCST (289 aa). N359 is a glycosylation site (N-linked (GlcNAc...) asparagine; by host). Disulfide bonds link C374/C427 and C386/C615. N-linked (GlcNAc...) asparagine; by host glycans are attached at residues N437, N649, N676, N696, N714, N739, and N788. Fusion peptide regions lie at residues 914-935 and 933-953; these read SAIE…VEAY and EAYN…VQSY. Residue N937 is glycosylated (N-linked (GlcNAc...) asparagine; by host). A disulfide bond links C938 and C949. Positions 1014–1064 are heptad repeat 1; it reads QKLIANAFNNALDAIQEGFDATNSALVKIQAVVNANAEALNNLLQQLSNRF. A coiled-coil region spans residues 1043–1087; that stretch reads QAVVNANAEALNNLLQQLSNRFGAISSSLQEILSRLDALEAQRQI. N-linked (GlcNAc...) asparagine; by host glycosylation is found at N1194, N1224, N1234, N1253, N1267, and N1288. A heptad repeat 2 region spans residues 1258–1296; the sequence is APDLSLDYINVTFLDLQDEMNRLQEAIKLLNQSYINLKD. Residues 1269–1297 adopt a coiled-coil conformation; sequence TFLDLQDEMNRLQEAIKLLNQSYINLKDI. The helical transmembrane segment at 1308-1328 threads the bilayer; the sequence is WYVWLLIGFAGVAMLVLLFFI. The Cytoplasmic portion of the chain corresponds to 1329-1363; it reads CCCTGCGTSCFKKCGGCCDDYTGHQELVIKTSHDD. Residues 1359–1363 carry the KxHxx motif; it reads TSHDD.

The protein belongs to the betacoronaviruses spike protein family. Homotrimer; each monomer consists of a S1 and a S2 subunit. The resulting peplomers protrude from the virus surface as spikes. Specific enzymatic cleavages in vivo yield mature proteins. The precursor is processed into S1 and S2 by host cell furin or another cellular protease to yield the mature S1 and S2 proteins. Additionally, a second cleavage leads to the release of a fusion peptide after viral attachment to host cell receptor. Post-translationally, the cytoplasmic Cys-rich domain is palmitoylated. Spike glycoprotein is digested within host endosomes.

Its subcellular location is the virion membrane. The protein resides in the host endoplasmic reticulum-Golgi intermediate compartment membrane. The protein localises to the host cell membrane. Attaches the virion to the cell membrane by interacting with host receptor, initiating the infection. Functionally, mediates fusion of the virion and cellular membranes by acting as a class I viral fusion protein. Under the current model, the protein has at least three conformational states: pre-fusion native state, pre-hairpin intermediate state, and post-fusion hairpin state. During viral and target cell membrane fusion, the coiled coil regions (heptad repeats) assume a trimer-of-hairpins structure, positioning the fusion peptide in close proximity to the C-terminal region of the ectodomain. The formation of this structure appears to drive apposition and subsequent fusion of viral and target cell membranes. In terms of biological role, acts as a viral fusion peptide which is unmasked following S2 cleavage occurring upon virus endocytosis. This chain is Spike glycoprotein, found in Bos taurus (Bovine).